The primary structure comprises 218 residues: Small ribosomal subunit protein uS3c (218 aa).

The KH type-2 domain occupies Val-47 to Ser-118.

The protein belongs to the universal ribosomal protein uS3 family. Part of the 30S ribosomal subunit.

It localises to the plastid. The protein localises to the chloroplast. In Barbarea verna (Land cress), this protein is Small ribosomal subunit protein uS3c (rps3).